Here is a 42-residue protein sequence, read N- to C-terminus: Photosystem I reaction center subunit IX (42 aa).

The helical transmembrane segment at 7–27 threads the bilayer; that stretch reads YLSVAPVLATLWFGSLAGLLI.

This sequence belongs to the PsaJ family.

The protein resides in the plastid. The protein localises to the chloroplast thylakoid membrane. May help in the organization of the PsaE and PsaF subunits. This chain is Photosystem I reaction center subunit IX, found in Chloranthus spicatus (Chulantree).